A 173-amino-acid chain; its full sequence is Adenine phosphoribosyltransferase (173 aa).

This sequence belongs to the purine/pyrimidine phosphoribosyltransferase family. In terms of assembly, homodimer.

It localises to the cytoplasm. It catalyses the reaction AMP + diphosphate = 5-phospho-alpha-D-ribose 1-diphosphate + adenine. The protein operates within purine metabolism; AMP biosynthesis via salvage pathway; AMP from adenine: step 1/1. Functionally, catalyzes a salvage reaction resulting in the formation of AMP, that is energically less costly than de novo synthesis. The chain is Adenine phosphoribosyltransferase from Listeria monocytogenes serovar 1/2a (strain ATCC BAA-679 / EGD-e).